The following is a 209-amino-acid chain: Uracil phosphoribosyltransferase (209 aa).

Residues Arg79, Arg104, and 131–139 contribute to the 5-phospho-alpha-D-ribose 1-diphosphate site; that span reads DPMLATGAS. Residues Ile194 and 199–201 each bind uracil; that span reads GDA. Asp200 is a binding site for 5-phospho-alpha-D-ribose 1-diphosphate.

It belongs to the UPRTase family. Mg(2+) is required as a cofactor.

It catalyses the reaction UMP + diphosphate = 5-phospho-alpha-D-ribose 1-diphosphate + uracil. It participates in pyrimidine metabolism; UMP biosynthesis via salvage pathway; UMP from uracil: step 1/1. Its activity is regulated as follows. Allosterically activated by GTP. Catalyzes the conversion of uracil and 5-phospho-alpha-D-ribose 1-diphosphate (PRPP) to UMP and diphosphate. The sequence is that of Uracil phosphoribosyltransferase from Staphylococcus carnosus (strain TM300).